We begin with the raw amino-acid sequence, 347 residues long: L-threonine 3-dehydrogenase (347 aa).

C43 serves as a coordination point for Zn(2+). Active-site charge relay system residues include T45 and H48. Residues H68, E69, C98, C101, C104, and C112 each coordinate Zn(2+). NAD(+)-binding positions include I180, D200, R205, 267-269, and 292-293; these read LSL and IT.

This sequence belongs to the zinc-containing alcohol dehydrogenase family. Homotetramer. It depends on Zn(2+) as a cofactor.

It is found in the cytoplasm. It carries out the reaction L-threonine + NAD(+) = (2S)-2-amino-3-oxobutanoate + NADH + H(+). It functions in the pathway amino-acid degradation; L-threonine degradation via oxydo-reductase pathway; glycine from L-threonine: step 1/2. Catalyzes the NAD(+)-dependent oxidation of L-threonine to 2-amino-3-ketobutyrate. The sequence is that of L-threonine 3-dehydrogenase from Bacillus subtilis (strain 168).